Here is a 63-residue protein sequence, read N- to C-terminus: Small ribosomal subunit protein eS27 (63 aa).

The Zn(2+) site is built by cysteine 18, cysteine 21, cysteine 37, and cysteine 40. The C4-type zinc-finger motif lies at cysteine 18–cysteine 40.

Belongs to the eukaryotic ribosomal protein eS27 family. Part of the 30S ribosomal subunit. Requires Zn(2+) as cofactor.

This is Small ribosomal subunit protein eS27 from Pyrococcus furiosus (strain ATCC 43587 / DSM 3638 / JCM 8422 / Vc1).